The primary structure comprises 145 residues: Large ribosomal subunit protein uL16 (145 aa).

It belongs to the universal ribosomal protein uL16 family. Part of the 50S ribosomal subunit.

Binds 23S rRNA and is also seen to make contacts with the A and possibly P site tRNAs. In Lactobacillus gasseri (strain ATCC 33323 / DSM 20243 / BCRC 14619 / CIP 102991 / JCM 1131 / KCTC 3163 / NCIMB 11718 / NCTC 13722 / AM63), this protein is Large ribosomal subunit protein uL16.